An 812-amino-acid polypeptide reads, in one-letter code: Lon protease (812 aa).

Positions 12-205 (LPMLPLRGVL…YLCELLAKEM (194 aa)) constitute a Lon N-terminal domain. 357 to 364 (GPPGVGKT) contacts ATP. Residues 593–774 (ENQVGVATGL…DEVLEETLLK (182 aa)) form the Lon proteolytic domain. Catalysis depends on residues Ser-680 and Lys-723.

This sequence belongs to the peptidase S16 family. Homohexamer. Organized in a ring with a central cavity.

The protein localises to the cytoplasm. It carries out the reaction Hydrolysis of proteins in presence of ATP.. Functionally, ATP-dependent serine protease that mediates the selective degradation of mutant and abnormal proteins as well as certain short-lived regulatory proteins. Required for cellular homeostasis and for survival from DNA damage and developmental changes induced by stress. Degrades polypeptides processively to yield small peptide fragments that are 5 to 10 amino acids long. Binds to DNA in a double-stranded, site-specific manner. The sequence is that of Lon protease from Syntrophomonas wolfei subsp. wolfei (strain DSM 2245B / Goettingen).